A 387-amino-acid chain; its full sequence is uncharacterized protein (387 aa).

The protein resides in the virion. This is an uncharacterized protein from Acanthamoeba polyphaga (Amoeba).